A 254-amino-acid polypeptide reads, in one-letter code: 5-oxoprolinase subunit A (254 aa).

Belongs to the LamB/PxpA family. In terms of assembly, forms a complex composed of PxpA, PxpB and PxpC.

It catalyses the reaction 5-oxo-L-proline + ATP + 2 H2O = L-glutamate + ADP + phosphate + H(+). In terms of biological role, catalyzes the cleavage of 5-oxoproline to form L-glutamate coupled to the hydrolysis of ATP to ADP and inorganic phosphate. This is 5-oxoprolinase subunit A from Rhodopseudomonas palustris (strain BisB5).